Reading from the N-terminus, the 131-residue chain is uncharacterized protein (131 aa).

In terms of domain architecture, Response regulatory spans 8-124 (DILVVDDDPD…ELIRLVQQYC (117 aa)). Residue aspartate 57 is modified to 4-aspartylphosphate.

This is an uncharacterized protein from Leptolyngbya boryana (Plectonema boryanum).